The primary structure comprises 106 residues: Nucleoid-associated protein Rpal_0620 (106 aa).

The protein belongs to the YbaB/EbfC family. In terms of assembly, homodimer.

The protein resides in the cytoplasm. The protein localises to the nucleoid. Binds to DNA and alters its conformation. May be involved in regulation of gene expression, nucleoid organization and DNA protection. This chain is Nucleoid-associated protein Rpal_0620, found in Rhodopseudomonas palustris (strain TIE-1).